Here is a 145-residue protein sequence, read N- to C-terminus: Basic phospholipase A2 P'513 (145 aa).

Residues 1 to 21 form the signal peptide; the sequence is MYPAHLLLLLAVCVSLLGASA. The propeptide occupies 22 to 27; it reads IPPLPL. 7 disulfides stabilise this stretch: Cys-38–Cys-98, Cys-54–Cys-144, Cys-56–Cys-72, Cys-71–Cys-125, Cys-78–Cys-118, Cys-87–Cys-111, and Cys-105–Cys-116. Positions 55, 57, and 59 each coordinate Ca(2+). The active site involves His-75. Ca(2+) is bound at residue Asp-76. Asp-119 is a catalytic residue.

The protein belongs to the phospholipase A2 family. Group I subfamily. D49 sub-subfamily. Ca(2+) serves as cofactor. In terms of tissue distribution, expressed by the venom gland.

It is found in the secreted. The catalysed reaction is a 1,2-diacyl-sn-glycero-3-phosphocholine + H2O = a 1-acyl-sn-glycero-3-phosphocholine + a fatty acid + H(+). In terms of biological role, PLA2 catalyzes the calcium-dependent hydrolysis of the 2-acyl groups in 3-sn-phosphoglycerides. This chain is Basic phospholipase A2 P'513, found in Laticauda laticaudata (Blue-ringed sea krait).